Reading from the N-terminus, the 409-residue chain is MADYLRQVMPENDSDSEALPRKSEQASLAWAEYTANFEMGLESSKLKNNKNMPEAFLLPNGYPDYLRLILTSRVYDVVTETPLTPVVNISNRLGCKVLLKREDLQPVFSFKLRGAYNKMAHLDPRDCWRGVVTYSTGNHAQGVAYSARKLRIPATIVMPSGTPDIMHMNVSRLGGSVILHGADLDTAKAEAERLEKIYNLISIPPLDDPYVIAGHGTIGMELLHQISSKNLEAVFCCAGEGSLIAGIGIYLKRIAPHVNIIGVEMHNPKATVKSLEGVKYTTLKDAGLFARCATVKTAGRESYRIFQEVVSEVIEVTMDETFGATKDIFEDTRAIIEPAGALVLAGLKKWVSQNPSVNQDRCLVAIASGANVDFDHLRLITERASIAENKGGLHEINGVSRNEEPYLLS.

The segment at 1–21 is disordered; it reads MADYLRQVMPENDSDSEALPR. Lys111 is subject to N6-(pyridoxal phosphate)lysine. Pyridoxal 5'-phosphate is bound by residues Asn138, 239–243, and Ser368; that span reads GEGSL.

This sequence belongs to the serine/threonine dehydratase family. It depends on pyridoxal 5'-phosphate as a cofactor.

Its pathway is mycotoxin biosynthesis. Functionally, threonine dehydratase-like protein; part of the gene clusters that mediate the biosynthesis of the host-selective toxins (HSTs) AK-toxins responsible for Japanese pear black spot disease by the Japanese pear pathotype. AK-toxins are esters of 9,10-epoxy 8-hydroxy 9-methyldecatrienoic acid (EDA). On cellular level, AK-toxins affect plasma membrane of susceptible cells and cause a sudden increase in loss of K(+) after a few minutes of toxin treatment. The acyl-CoA ligase AKT1, the hydrolase AKT2 and enoyl-CoA hydratase AKT3 are all involved in the biosynthesis of the AK-, AF- and ACT-toxin common 9,10-epoxy-8-hydroxy-9-methyl-decatrienoic acid (EDA) structural moiety. Part of the EDA biosynthesis occurs in the peroxisome since these 3 enzymes are localized in peroxisomes. The exact roles of the 3 enzymes, as well as of additional AK-toxin clusters enzymes, including AKT4, AKT6 and AKTS1, have still to be elucidated. The Cytochrome P450 monooxygenase AKT7 on the other side functions to limit production of EDA and AK-toxin, probably via the catalysis of a side reaction of EDA or its precursor. This Alternaria alternata (Alternaria rot fungus) protein is Threonine dehydratase-like protein AKTS1-1.